Here is a 50-residue protein sequence, read N- to C-terminus: Large ribosomal subunit protein bL33 (50 aa).

It belongs to the bacterial ribosomal protein bL33 family.

This chain is Large ribosomal subunit protein bL33, found in Hydrogenovibrio crunogenus (strain DSM 25203 / XCL-2) (Thiomicrospira crunogena).